We begin with the raw amino-acid sequence, 160 residues long: 6,7-dimethyl-8-ribityllumazine synthase (160 aa).

5-amino-6-(D-ribitylamino)uracil is bound by residues W28, 59–61 (SFE), and 82–84 (VII). (2S)-2-hydroxy-3-oxobutyl phosphate is bound at residue 87 to 88 (GT). H90 acts as the Proton donor in catalysis. 5-amino-6-(D-ribitylamino)uracil is bound at residue F115. R129 serves as a coordination point for (2S)-2-hydroxy-3-oxobutyl phosphate.

This sequence belongs to the DMRL synthase family.

It carries out the reaction (2S)-2-hydroxy-3-oxobutyl phosphate + 5-amino-6-(D-ribitylamino)uracil = 6,7-dimethyl-8-(1-D-ribityl)lumazine + phosphate + 2 H2O + H(+). It participates in cofactor biosynthesis; riboflavin biosynthesis; riboflavin from 2-hydroxy-3-oxobutyl phosphate and 5-amino-6-(D-ribitylamino)uracil: step 1/2. Its function is as follows. Catalyzes the formation of 6,7-dimethyl-8-ribityllumazine by condensation of 5-amino-6-(D-ribitylamino)uracil with 3,4-dihydroxy-2-butanone 4-phosphate. This is the penultimate step in the biosynthesis of riboflavin. This Clavibacter michiganensis subsp. michiganensis (strain NCPPB 382) protein is 6,7-dimethyl-8-ribityllumazine synthase.